A 203-amino-acid chain; its full sequence is Twist-related protein 1 (203 aa).

Low complexity predominate over residues 1–18; sequence MMQDVSSSPVSPADDSLS. Residues 1–106 are disordered; that stretch reads MMQDVSSSPV…GGGSPQSYEE (106 aa). Residues 34-43 are compositionally biased toward basic residues; it reads RGGRKRRSSS. Composition is skewed to gly residues over residues 47-66 and 81-100; these read AGGGAGPGGAASGGVGGGDE and GCGGGGGGGAGGGSSSGGGS. The region spanning 109 to 160 is the bHLH domain; that stretch reads TQRVMANVRERQRTQSLNEAFAALRKIIPTLPSDKLSKIQTLKLAARYIDFL. The tract at residues 162 to 192 is sufficient for transactivation activity; the sequence is QVLQSDELDSKMASCSYVAHERLSYAFSVWR.

In terms of assembly, efficient DNA binding requires dimerization with another bHLH protein. Homodimer or heterodimer with E proteins such as TCF3. ID1 binds preferentially to TCF3 but does not interact efficiently with TWIST1 so ID1 levels control the amount of TCF3 available to dimerize with TWIST and thus determine the type of dimer formed.

The protein resides in the nucleus. Functionally, acts as a transcriptional regulator. Inhibits myogenesis by sequestrating E proteins, inhibiting trans-activation by MEF2, and inhibiting DNA-binding by MYOD1 through physical interaction. This interaction probably involves the basic domains of both proteins. Also represses expression of pro-inflammatory cytokines such as TNFA and IL1B. Regulates cranial suture patterning and fusion. Activates transcription as a heterodimer with E proteins. Regulates gene expression differentially, depending on dimer composition. Homodimers induce expression of FGFR2 and POSTN while heterodimers repress FGFR2 and POSTN expression and induce THBS1 expression. Heterodimerization is also required for osteoblast differentiation. Represses the activity of the circadian transcriptional activator: NPAS2-BMAL1 heterodimer. The protein is Twist-related protein 1 (TWIST1) of Pongo pygmaeus (Bornean orangutan).